Consider the following 95-residue polypeptide: DNA-directed RNA polymerase subunit Rpo11 (95 aa).

This sequence belongs to the archaeal Rpo11/eukaryotic RPB11/RPC19 RNA polymerase subunit family. In terms of assembly, part of the RNA polymerase complex.

The protein localises to the cytoplasm. It catalyses the reaction RNA(n) + a ribonucleoside 5'-triphosphate = RNA(n+1) + diphosphate. Its function is as follows. DNA-dependent RNA polymerase (RNAP) catalyzes the transcription of DNA into RNA using the four ribonucleoside triphosphates as substrates. This is DNA-directed RNA polymerase subunit Rpo11 from Thermococcus onnurineus (strain NA1).